Consider the following 913-residue polypeptide: Valine--tRNA ligase (913 aa).

Residues 49-59 (PNVTGNLHLGH) carry the 'HIGH' region motif. A 'KMSKS' region motif is present at residues 544–548 (KMSKS). Lys547 serves as a coordination point for ATP. A coiled-coil region spans residues 851 to 912 (DWVKKQQKRL…ERLEGVLAQL (62 aa)).

It belongs to the class-I aminoacyl-tRNA synthetase family. ValS type 1 subfamily. Monomer.

Its subcellular location is the cytoplasm. It catalyses the reaction tRNA(Val) + L-valine + ATP = L-valyl-tRNA(Val) + AMP + diphosphate. Functionally, catalyzes the attachment of valine to tRNA(Val). As ValRS can inadvertently accommodate and process structurally similar amino acids such as threonine, to avoid such errors, it has a 'posttransfer' editing activity that hydrolyzes mischarged Thr-tRNA(Val) in a tRNA-dependent manner. The chain is Valine--tRNA ligase from Deinococcus radiodurans (strain ATCC 13939 / DSM 20539 / JCM 16871 / CCUG 27074 / LMG 4051 / NBRC 15346 / NCIMB 9279 / VKM B-1422 / R1).